The sequence spans 188 residues: Molybdopterin synthase catalytic subunit (188 aa).

Residues Met1–Pro14 are compositionally biased toward low complexity. Residues Met1–Thr23 form a disordered region. Residues His134–Arg135, Lys150, and Lys157–Glu159 contribute to the substrate site.

It belongs to the MoaE family. MOCS2B subfamily. Heterotetramer; composed of 2 small (MOCS2A) and 2 large (MOCS2B) subunits.

Its subcellular location is the cytoplasm. It carries out the reaction 2 [molybdopterin-synthase sulfur-carrier protein]-C-terminal-Gly-aminoethanethioate + cyclic pyranopterin phosphate + H2O = molybdopterin + 2 [molybdopterin-synthase sulfur-carrier protein]-C-terminal Gly-Gly + 2 H(+). Its pathway is cofactor biosynthesis; molybdopterin biosynthesis. Functionally, catalytic subunit of the molybdopterin synthase complex, a complex that catalyzes the conversion of precursor Z into molybdopterin. Acts by mediating the incorporation of 2 sulfur atoms from thiocarboxylated MOCS2A into precursor Z to generate a dithiolene group. The sequence is that of Molybdopterin synthase catalytic subunit from Neosartorya fischeri (strain ATCC 1020 / DSM 3700 / CBS 544.65 / FGSC A1164 / JCM 1740 / NRRL 181 / WB 181) (Aspergillus fischerianus).